We begin with the raw amino-acid sequence, 544 residues long: Chaperonin GroEL (544 aa).

Residues 29 to 32 (TLGP), 86 to 90 (DGTTT), Gly413, 476 to 478 (NAA), and Asp492 each bind ATP.

The protein belongs to the chaperonin (HSP60) family. As to quaternary structure, forms a cylinder of 14 subunits composed of two heptameric rings stacked back-to-back. Interacts with the co-chaperonin GroES.

The protein localises to the cytoplasm. It catalyses the reaction ATP + H2O + a folded polypeptide = ADP + phosphate + an unfolded polypeptide.. In terms of biological role, together with its co-chaperonin GroES, plays an essential role in assisting protein folding. The GroEL-GroES system forms a nano-cage that allows encapsulation of the non-native substrate proteins and provides a physical environment optimized to promote and accelerate protein folding. The polypeptide is Chaperonin GroEL (Halalkalibacterium halodurans (strain ATCC BAA-125 / DSM 18197 / FERM 7344 / JCM 9153 / C-125) (Bacillus halodurans)).